The primary structure comprises 132 residues: Aspartate 1-decarboxylase (132 aa).

Ser-25 functions as the Schiff-base intermediate with substrate; via pyruvic acid in the catalytic mechanism. Ser-25 bears the Pyruvic acid (Ser) mark. Thr-57 is a binding site for substrate. Tyr-58 acts as the Proton donor in catalysis. Substrate is bound at residue 73–75 (GAA).

This sequence belongs to the PanD family. Heterooctamer of four alpha and four beta subunits. Pyruvate is required as a cofactor. Is synthesized initially as an inactive proenzyme, which is activated by self-cleavage at a specific serine bond to produce a beta-subunit with a hydroxyl group at its C-terminus and an alpha-subunit with a pyruvoyl group at its N-terminus.

The protein resides in the cytoplasm. The enzyme catalyses L-aspartate + H(+) = beta-alanine + CO2. Its pathway is cofactor biosynthesis; (R)-pantothenate biosynthesis; beta-alanine from L-aspartate: step 1/1. Its function is as follows. Catalyzes the pyruvoyl-dependent decarboxylation of aspartate to produce beta-alanine. The polypeptide is Aspartate 1-decarboxylase (Geotalea uraniireducens (strain Rf4) (Geobacter uraniireducens)).